We begin with the raw amino-acid sequence, 122 residues long: NADPH-dependent 7-cyano-7-deazaguanine reductase (122 aa).

The Thioimide intermediate role is filled by cysteine 34. The active-site Proton donor is aspartate 41. Residues 56-58 and 75-76 each bind substrate; these read VEL and HE.

It belongs to the GTP cyclohydrolase I family. QueF type 1 subfamily.

It localises to the cytoplasm. It catalyses the reaction 7-aminomethyl-7-carbaguanine + 2 NADP(+) = 7-cyano-7-deazaguanine + 2 NADPH + 3 H(+). It functions in the pathway tRNA modification; tRNA-queuosine biosynthesis. Functionally, catalyzes the NADPH-dependent reduction of 7-cyano-7-deazaguanine (preQ0) to 7-aminomethyl-7-deazaguanine (preQ1). This Anaeromyxobacter dehalogenans (strain 2CP-1 / ATCC BAA-258) protein is NADPH-dependent 7-cyano-7-deazaguanine reductase.